Consider the following 375-residue polypeptide: Anhydro-N-acetylmuramic acid kinase (375 aa).

13–20 is an ATP binding site; the sequence is GTSMDGVD.

It belongs to the anhydro-N-acetylmuramic acid kinase family.

The enzyme catalyses 1,6-anhydro-N-acetyl-beta-muramate + ATP + H2O = N-acetyl-D-muramate 6-phosphate + ADP + H(+). Its pathway is amino-sugar metabolism; 1,6-anhydro-N-acetylmuramate degradation. It participates in cell wall biogenesis; peptidoglycan recycling. Its function is as follows. Catalyzes the specific phosphorylation of 1,6-anhydro-N-acetylmuramic acid (anhMurNAc) with the simultaneous cleavage of the 1,6-anhydro ring, generating MurNAc-6-P. Is required for the utilization of anhMurNAc either imported from the medium or derived from its own cell wall murein, and thus plays a role in cell wall recycling. The polypeptide is Anhydro-N-acetylmuramic acid kinase (Pelagibacter ubique (strain HTCC1062)).